Here is an 861-residue protein sequence, read N- to C-terminus: Leucine--tRNA ligase (861 aa).

Residues 42–52 (PYPSGKLHMGH) carry the 'HIGH' region motif. Positions 619–623 (KMSKS) match the 'KMSKS' region motif. An ATP-binding site is contributed by K622.

The protein belongs to the class-I aminoacyl-tRNA synthetase family.

Its subcellular location is the cytoplasm. The catalysed reaction is tRNA(Leu) + L-leucine + ATP = L-leucyl-tRNA(Leu) + AMP + diphosphate. This is Leucine--tRNA ligase from Actinobacillus pleuropneumoniae serotype 5b (strain L20).